Here is a 281-residue protein sequence, read N- to C-terminus: Endochitinase B (281 aa).

An N-terminal signal peptide occupies residues methionine 1–alanine 33. Positions glutamine 34–serine 68 constitute a Chitin-binding type-1 domain. 4 disulfide bridges follow: cysteine 36–cysteine 44, cysteine 38–cysteine 50, cysteine 43–cysteine 57, and cysteine 61–cysteine 66. Residues glycine 69–glycine 78 form a hinge region (Gly-rich) region. The segment at alanine 79 to cysteine 281 is catalytic. Cysteine 101 and cysteine 150 form a disulfide bridge. Glutamate 145 serves as the catalytic Proton donor. The N-linked (GlcNAc...) asparagine glycan is linked to asparagine 156. Disulfide bonds link cysteine 162–cysteine 171 and cysteine 249–cysteine 281. Asparagine 278 carries an N-linked (GlcNAc...) asparagine glycan.

Belongs to the glycosyl hydrolase 19 family. Chitinase class I subfamily.

Its subcellular location is the secreted. The catalysed reaction is Random endo-hydrolysis of N-acetyl-beta-D-glucosaminide (1-&gt;4)-beta-linkages in chitin and chitodextrins.. Functionally, defense against chitin-containing fungal pathogens. Its action is countered by fungal polyglycine hydrolases, that cleaves within its hinge region (Gly-rich) to disrupt chitin-binding. The protein is Endochitinase B of Zea mays (Maize).